Consider the following 322-residue polypeptide: Acetyl-coenzyme A carboxylase carboxyl transferase subunit alpha (322 aa).

One can recognise a CoA carboxyltransferase C-terminal domain in the interval 30–293 (ALDISAEITR…RQALQESLRK (264 aa)).

Belongs to the AccA family. In terms of assembly, acetyl-CoA carboxylase is a heterohexamer composed of biotin carboxyl carrier protein (AccB), biotin carboxylase (AccC) and two subunits each of ACCase subunit alpha (AccA) and ACCase subunit beta (AccD).

The protein resides in the cytoplasm. The enzyme catalyses N(6)-carboxybiotinyl-L-lysyl-[protein] + acetyl-CoA = N(6)-biotinyl-L-lysyl-[protein] + malonyl-CoA. It functions in the pathway lipid metabolism; malonyl-CoA biosynthesis; malonyl-CoA from acetyl-CoA: step 1/1. Component of the acetyl coenzyme A carboxylase (ACC) complex. First, biotin carboxylase catalyzes the carboxylation of biotin on its carrier protein (BCCP) and then the CO(2) group is transferred by the carboxyltransferase to acetyl-CoA to form malonyl-CoA. This chain is Acetyl-coenzyme A carboxylase carboxyl transferase subunit alpha, found in Nitrosomonas eutropha (strain DSM 101675 / C91 / Nm57).